Here is a 386-residue protein sequence, read N- to C-terminus: bHLH transcription factor RHL1 (386 aa).

The tract at residues 119 to 186 (FTGSLNGTQP…RRGQATDPHS (68 aa)) is disordered. Over residues 127–137 (QPQQHFQHPPQ) the composition is skewed to low complexity. Over residues 138–151 (GNSNQIQGQNFGAT) the composition is skewed to polar residues. Positions 180 to 193 (QATDPHSIAERLRR) are basic motif; degenerate. A bHLH domain is found at 180–229 (QATDPHSIAERLRRERIAERMKALQELVPNANKTDKASMLDEIIDYVKFL). A helix-loop-helix motif region spans residues 194–229 (ERIAERMKALQELVPNANKTDKASMLDEIIDYVKFL).

In terms of tissue distribution, expressed in root epidermal cells.

It localises to the nucleus. In terms of biological role, transcription factor that regulates the development of root hairs. The chain is bHLH transcription factor RHL1 from Lotus japonicus (Lotus corniculatus var. japonicus).